Consider the following 117-residue polypeptide: Small ribosomal subunit protein bS18c (117 aa).

Residues 86–117 (SELTPRTNALKARNKNKQNKYQNNQTKFLSNF) form a disordered region.

It belongs to the bacterial ribosomal protein bS18 family. In terms of assembly, part of the 30S ribosomal subunit.

Its subcellular location is the plastid. The sequence is that of Small ribosomal subunit protein bS18c from Cuscuta exaltata (Tall dodder).